The chain runs to 132 residues: Phosphoribosyl-AMP cyclohydrolase (132 aa).

Asp-79 is a Mg(2+) binding site. Cys-80 provides a ligand contact to Zn(2+). Asp-81 and Asp-83 together coordinate Mg(2+). Residues Cys-100 and Cys-107 each contribute to the Zn(2+) site.

It belongs to the PRA-CH family. In terms of assembly, homodimer. The cofactor is Mg(2+). Zn(2+) serves as cofactor.

It localises to the cytoplasm. The enzyme catalyses 1-(5-phospho-beta-D-ribosyl)-5'-AMP + H2O = 1-(5-phospho-beta-D-ribosyl)-5-[(5-phospho-beta-D-ribosylamino)methylideneamino]imidazole-4-carboxamide. It functions in the pathway amino-acid biosynthesis; L-histidine biosynthesis; L-histidine from 5-phospho-alpha-D-ribose 1-diphosphate: step 3/9. Functionally, catalyzes the hydrolysis of the adenine ring of phosphoribosyl-AMP. This chain is Phosphoribosyl-AMP cyclohydrolase, found in Acidovorax sp. (strain JS42).